Consider the following 344-residue polypeptide: Dihydroorotate dehydrogenase (quinone) (344 aa).

Residues 65 to 69 (AGLDK) and Thr89 each bind FMN. Residue Lys69 participates in substrate binding. Position 114 to 118 (114 to 118 (NRLGF)) interacts with substrate. FMN contacts are provided by Asn145 and Asn178. Position 178 (Asn178) interacts with substrate. Ser181 acts as the Nucleophile in catalysis. Asn183 lines the substrate pocket. Residues Lys223 and Thr251 each contribute to the FMN site. Residue 252–253 (NT) participates in substrate binding. FMN is bound by residues Gly274, Gly303, and 324–325 (YT).

This sequence belongs to the dihydroorotate dehydrogenase family. Type 2 subfamily. In terms of assembly, monomer. FMN serves as cofactor.

Its subcellular location is the cell membrane. It carries out the reaction (S)-dihydroorotate + a quinone = orotate + a quinol. It participates in pyrimidine metabolism; UMP biosynthesis via de novo pathway; orotate from (S)-dihydroorotate (quinone route): step 1/1. Its function is as follows. Catalyzes the conversion of dihydroorotate to orotate with quinone as electron acceptor. This chain is Dihydroorotate dehydrogenase (quinone), found in Methylibium petroleiphilum (strain ATCC BAA-1232 / LMG 22953 / PM1).